The sequence spans 1027 residues: D-2-hydroxyglutarate dehydrogenase (1027 aa).

An FAD-binding PCMH-type domain is found at 48-284 (YQQLPQAILF…CEAKLNLLLI (237 aa)). (R)-2-hydroxyglutarate-binding residues include Arg405 and His503. A 4Fe-4S ferredoxin-type domain is found at 665–696 (HEVKAAMDTCLACKACASQCPIKIDVPSFRAK). [4Fe-4S] cluster contacts are provided by Cys674, Cys677, Cys680, and Cys684.

In the N-terminal section; belongs to the FAD-binding oxidoreductase/transferase type 4 family. Homotetramer. The cofactor is [4Fe-4S] cluster. It depends on FAD as a cofactor.

The catalysed reaction is (R)-2-hydroxyglutarate + A = 2-oxoglutarate + AH2. Its function is as follows. Catalyzes the oxidation of D-2-hydroxyglutarate (D-2-HGA) to 2-oxoglutarate. Provides the way to recycle D-2-HGA produced during L-serine synthesis by SerA, by converting it back to 2-oxoglutarate. The physiological molecule that functions as the primary electron acceptor during D-2-HGA oxidation is unknown. This chain is D-2-hydroxyglutarate dehydrogenase, found in Haemophilus influenzae (strain ATCC 51907 / DSM 11121 / KW20 / Rd).